The chain runs to 308 residues: Putative S-adenosyl-L-methionine-dependent methyltransferase Mb3816c (308 aa).

S-adenosyl-L-methionine-binding positions include aspartate 131 and 160–161; that span reads DL.

This sequence belongs to the UPF0677 family.

Its function is as follows. Exhibits S-adenosyl-L-methionine-dependent methyltransferase activity. The protein is Putative S-adenosyl-L-methionine-dependent methyltransferase Mb3816c of Mycobacterium bovis (strain ATCC BAA-935 / AF2122/97).